We begin with the raw amino-acid sequence, 607 residues long: Potassium transporter KimA (607 aa).

The Cytoplasmic portion of the chain corresponds to 1–30; the sequence is MYHSIKRFLIGKPLKSQAAGEQKLTKLKAL. A helical membrane pass occupies residues 31–49; sequence AMLSSDALSSVAYGTEQIL. Aspartate 36 and tyrosine 43 together coordinate K(+). Residues 50–62 lie on the Extracellular side of the membrane; that stretch reads IILATISAAAFWY. A helical membrane pass occupies residues 63-84; it reads SIPIAVGVLILLLALILSYRQI. Topologically, residues 85–105 are cytoplasmic; the sequence is IYAYPQGGGAYIVSKENLGEK. The chain crosses the membrane as a helical span at residues 106 to 134; that stretch reads PGLIAGGSLLVDYILTVAVSISAGTDAIT. Residues aspartate 117 and serine 125 each coordinate K(+). At 135–142 the chain is on the extracellular side; that stretch reads SAFPALHD. The helical transmembrane segment at 143–162 threads the bilayer; that stretch reads YHVPIAIFLVLVIMILNLRG. The Cytoplasmic segment spans residues 163 to 166; that stretch reads LSES. Residues 167 to 190 traverse the membrane as a helical segment; sequence ASILAYPVYLFVVALLVLIAVGLF. Residues 191-214 are Extracellular-facing; it reads KLMTGQIDQPAHHTSLGTPVAGIT. Residues 215 to 238 traverse the membrane as a helical segment; sequence LFLLLKAFSSGCSALTGVEAISNA. Residues 239-249 are Cytoplasmic-facing; it reads IPAFKNPPARN. Residues 250–271 traverse the membrane as a helical segment; that stretch reads AARTLAMMGILLAILFSGITVL. Residues 272 to 298 lie on the Extracellular side of the membrane; the sequence is AYGYGTAPKPDETVVSQIASETFGRNV. The chain crosses the membrane as a helical span at residues 299–323; that stretch reads FYYVIQGVTSLILVLAANTGFSAFP. Residues 324–347 are Cytoplasmic-facing; it reads QLAFNLARDQYMPRMFTVRGDRLG. Residues 348–366 form a helical membrane-spanning segment; it reads FSNGIIFLGFASIVLIILF. The Extracellular segment spans residues 367 to 372; the sequence is GGQTEH. Residues 373–393 traverse the membrane as a helical segment; that stretch reads LIPLYAVGVFIPFTLSQTGMC. Residues 394-405 are Cytoplasmic-facing; that stretch reads MKWIKQKPKGWI. Residues 406–428 traverse the membrane as a helical segment; sequence GKMLINSCGALISFMVLSILFVT. Residues 429-431 lie on the Extracellular side of the membrane; sequence KFN. A helical membrane pass occupies residues 432-447; sequence VVWPVLIFMPIVVLLF. Over 448–607 the chain is Cytoplasmic; that stretch reads FAIKNHYTAV…VATLPYHFKK (160 aa).

Belongs to the amino acid-polyamine-organocation (APC) superfamily. As to quaternary structure, homodimer.

It is found in the cell membrane. The catalysed reaction is K(+)(in) + H(+)(in) = K(+)(out) + H(+)(out). Potassium uptake increases at lower external pH and is abolished by the proton ionophore carbonyl cyanide m-chlorophenylhydrazone (CCCP). Binds cyclic di-AMP (c-di-AMP), which inhibits the potassium transport activity. In terms of biological role, high-affinity potassium transporter. Functions as a K(+)/H(+) symporter. This Bacillus subtilis (strain 168) protein is Potassium transporter KimA.